Here is a 306-residue protein sequence, read N- to C-terminus: D-alanine--D-alanine ligase (306 aa).

Residues K107–E300 enclose the ATP-grasp domain. I134–T184 lines the ATP pocket. D251, E267, and N269 together coordinate Mg(2+).

Belongs to the D-alanine--D-alanine ligase family. It depends on Mg(2+) as a cofactor. Mn(2+) serves as cofactor.

It localises to the cytoplasm. The enzyme catalyses 2 D-alanine + ATP = D-alanyl-D-alanine + ADP + phosphate + H(+). The protein operates within cell wall biogenesis; peptidoglycan biosynthesis. Its function is as follows. Cell wall formation. This is D-alanine--D-alanine ligase from Ruegeria sp. (strain TM1040) (Silicibacter sp.).